Reading from the N-terminus, the 670-residue chain is Zinc finger protein 233 (670 aa).

In terms of domain architecture, KRAB spans 8–79; sequence VTFKDVAVVF…ETEIQGDGCS (72 aa). The C2H2-type 1; degenerate zinc finger occupies 258 to 280; it reads QTSDENGKGLSVGSNLELHQQLH. Residues 311 to 336 form a C2H2-type 2; degenerate zinc finger; it reads EKCYRNGDSGEGFSQGSHLQPHQRVS. The C2H2-type 3; degenerate zinc-finger motif lies at 342–364; the sequence is YRCQVYARSSNQNSCLPSHELTH. Residues 370 to 392 form a C2H2-type 4; degenerate zinc finger; sequence CTCGRCGKGFHHSLDFDIHCVDS. The C2H2-type 5; degenerate zinc finger occupies 398–420; the sequence is CKCDVYDKGFSQTSQLQAHQRGH. 7 C2H2-type zinc fingers span residues 452 to 474, 480 to 502, 508 to 530, 536 to 558, 564 to 586, 592 to 614, and 620 to 642; these read YKCEVCDKGFSKASNLQAHQRIH, YKCDVCDKNFSRNSHLQAHQRVH, YKCDTCGKDFSQISHLQAHQRVH, YKCETCGKGFSQSSHLQDHQQVH, YKCDVCGKGFSWSSHLQAHQRVH, YKCEECRKGFIWNSYLHVHQRIH, and YKCGMCGKSFSQTSHLQAHQRVH.

The protein belongs to the krueppel C2H2-type zinc-finger protein family.

The protein localises to the nucleus. Functionally, may be involved in transcriptional regulation. The protein is Zinc finger protein 233 (ZNF233) of Homo sapiens (Human).